The sequence spans 495 residues: MPLSLSNRDQNSGHLFYNRRLRAATTRFSVRMKHDDRKQTAALALSMVLVAIAAGWMMLLNVLKPTGIVGDSAIIGDRDSGALYARIDGRLYPALNLTSARLATGTAGQPTWVKPAEIAKYPTGPLVGIPGAPAAMPVNRGAVSAWAVCDTAGRPRSADKPVVTSIAGPITGGGRATHLRDDAGLLVTFDGSTYVIWGGKRSQIDPTNRAVTLSLGLDPGVTSPIQISRALFDGLPATEPLRVPAVPEAGTPSTWVPGARVGSVLQAQTAGGGSQFYVLLPDGVQKISSFVADLLRSANSYGAAAPRVVTPDVLVHTPQVTSLPVEYYPAGRLNFVDTAADPTTCVSWEKASTDPQARVAVYNGRGLPVPPSMDSRIVRLVRDDRAPASVVATQVLVLPGAANFVTSTSGVITAESRESLFWVSGNGVRFGIANDEATLRALGLDPGAAVQAPWPLLRTFAAGPALSRDAALLARDTVPTLGQVAIVTTTAKAGA.

The helical transmembrane segment at 43–63 (LALSMVLVAIAAGWMMLLNVL) threads the bilayer.

It belongs to the EccB family. Part of the ESX-2 / type VII secretion system (T7SS), which is composed of cytosolic and membrane components.

Its subcellular location is the cell membrane. Its function is as follows. An ATPase. This is ESX-2 secretion system ATPase EccB2 (eccB2) from Mycobacterium tuberculosis (strain CDC 1551 / Oshkosh).